The sequence spans 199 residues: Transgelin-2 (199 aa).

Ala2 is subject to N-acetylalanine. Position 11 is a phosphoserine (Ser11). An N6-acetyllysine mark is found at Lys17 and Lys20. One can recognise a Calponin-homology (CH) domain in the interval 24–136 (ADLEQILIQW…RTLMNLGGLA (113 aa)). Ser163 carries the phosphoserine modification. Lys171 participates in a covalent cross-link: Glycyl lysine isopeptide (Lys-Gly) (interchain with G-Cter in SUMO2). A Calponin-like repeat occupies 174-199 (IGLQMGTNRGASQAGMTGYGMPRQIL). Phosphothreonine is present on Thr180. An omega-N-methylarginine mark is found at Arg182 and Arg196.

This sequence belongs to the calponin family. In terms of tissue distribution, expressed in epididymis (at protein level).

In Homo sapiens (Human), this protein is Transgelin-2 (TAGLN2).